The chain runs to 357 residues: Tetraacyldisaccharide 4'-kinase (357 aa).

Position 49 to 56 (49 to 56) interacts with ATP; it reads TIGGTGKT.

The protein belongs to the LpxK family.

It carries out the reaction a lipid A disaccharide + ATP = a lipid IVA + ADP + H(+). The protein operates within glycolipid biosynthesis; lipid IV(A) biosynthesis; lipid IV(A) from (3R)-3-hydroxytetradecanoyl-[acyl-carrier-protein] and UDP-N-acetyl-alpha-D-glucosamine: step 6/6. Transfers the gamma-phosphate of ATP to the 4'-position of a tetraacyldisaccharide 1-phosphate intermediate (termed DS-1-P) to form tetraacyldisaccharide 1,4'-bis-phosphate (lipid IVA). This is Tetraacyldisaccharide 4'-kinase from Porphyromonas gingivalis (strain ATCC 33277 / DSM 20709 / CIP 103683 / JCM 12257 / NCTC 11834 / 2561).